Here is a 155-residue protein sequence, read N- to C-terminus: Endoribonuclease YbeY (155 aa).

Positions 114, 118, and 124 each coordinate Zn(2+).

Belongs to the endoribonuclease YbeY family. It depends on Zn(2+) as a cofactor.

It is found in the cytoplasm. In terms of biological role, single strand-specific metallo-endoribonuclease involved in late-stage 70S ribosome quality control and in maturation of the 3' terminus of the 16S rRNA. In Escherichia coli O1:K1 / APEC, this protein is Endoribonuclease YbeY.